Reading from the N-terminus, the 754-residue chain is LON peptidase N-terminal domain and RING finger protein 2 (754 aa).

TPR repeat units lie at residues 23 to 58 and 59 to 91; these read IAQRLEEGDEAFRAGDYEMAAELFRSMLAGLAQPDR and GLCLRLGDALARAGRLPEALGAFRGAARLGALR. Residues 112–136 form a disordered region; the sequence is PLSAENPGGEPEAPGEGGPAPEPRA. The segment covering 115 to 125 has biased composition (low complexity); it reads AENPGGEPEAP. TPR repeat units lie at residues 197-230, 231-264, and 266-298; these read LRRLAGQARSLQRQQQPEAALLRCDQALELAPDD, NSLLLLRAELYLTMKNYEQALQDASAACQNEPLL, and KGHQVKAQALSGLGRSKEVLKEFLYCLALNPEC. A disordered region spans residues 398 to 439; sequence GLKRQFPDDVEDAPDLNAPGKIPKKDLSLQRSPNSETEESQG. The span at 426 to 439 shows a compositional bias: polar residues; sequence LQRSPNSETEESQG. A TPR 6 repeat occupies 447–483; the sequence is FECALCMRLLFEPVTTPCGHTFCLKCLERCLDHAPHC. The RING-type zinc finger occupies 449–487; that stretch reads CALCMRLLFEPVTTPCGHTFCLKCLERCLDHAPHCPLCK. One can recognise a Lon N-terminal domain in the interval 528–737; sequence MSELSNLTRD…AIRRILVIIT (210 aa).

This is LON peptidase N-terminal domain and RING finger protein 2 (LONRF2) from Homo sapiens (Human).